The sequence spans 242 residues: ATP synthase subunit a (242 aa).

Transmembrane regions (helical) follow at residues 29–49 (SSIY…LAFY), 84–104 (FIPL…LGMT), 114–134 (IIVT…VGFV), 140–160 (FLTL…MIVI), 181–201 (MAGH…MIYL), and 203–223 (FLPI…AILQ).

Belongs to the ATPase A chain family. As to quaternary structure, F-type ATPases have 2 components, CF(1) - the catalytic core - and CF(0) - the membrane proton channel. CF(1) has five subunits: alpha(3), beta(3), gamma(1), delta(1), epsilon(1). CF(0) has three main subunits: a(1), b(2) and c(9-12). The alpha and beta chains form an alternating ring which encloses part of the gamma chain. CF(1) is attached to CF(0) by a central stalk formed by the gamma and epsilon chains, while a peripheral stalk is formed by the delta and b chains.

The protein localises to the cell membrane. Key component of the proton channel; it plays a direct role in the translocation of protons across the membrane. The chain is ATP synthase subunit a from Rickettsia africae (strain ESF-5).